Consider the following 641-residue polypeptide: Raffinose carrier protein (641 aa).

Residues 1 to 506 form a permease region; it reads MQEEHNYKWV…GQVIPLAQVN (506 aa). Transmembrane regions (helical) follow at residues 25-45, 57-77, 93-113, 120-140, 168-188, 201-221, 253-273, 288-308, 317-337, 342-362, 394-414, and 429-449; these read AFYSILSGYLIIFITSHLFDT, LVTLIIMVLRIVELFIDPFIG, WVVVGGTVSSIILLLLFTNLG, AMIYLVVFAILYITMDIFYSF, LGSTIGGGLVGVLVMPAVIFF, WFIFALIICLIALISAWGVGL, LLWAALAYLFYGVGINILGSL, FSILSIINIFLGLIATSLFPV, GVFAGCLVFMLGGIAIFTIAG, LVLLAATMFGFPQQMVFLVVL, FGGAISNGVVGQIAIISGMTT, and FKLTMFAFPALMLLIAIGIFS. The PTS EIIA type-1 domain occupies 507–611; it reads DPTFAAGTLG…DDTVIMTVTN (105 aa). His559 bears the Phosphohistidine; by HPr mark.

The protein in the N-terminal section; belongs to the sodium:galactoside symporter (TC 2.A.2) family.

The protein resides in the cell membrane. This Pediococcus pentosaceus protein is Raffinose carrier protein (rafP).